We begin with the raw amino-acid sequence, 434 residues long: UDP-N-acetylmuramate--L-alanine ligase (434 aa).

110–116 (GAHGKTS) is an ATP binding site.

This sequence belongs to the MurCDEF family.

It localises to the cytoplasm. The enzyme catalyses UDP-N-acetyl-alpha-D-muramate + L-alanine + ATP = UDP-N-acetyl-alpha-D-muramoyl-L-alanine + ADP + phosphate + H(+). It participates in cell wall biogenesis; peptidoglycan biosynthesis. Functionally, cell wall formation. This chain is UDP-N-acetylmuramate--L-alanine ligase, found in Limosilactobacillus reuteri (strain DSM 20016) (Lactobacillus reuteri).